The sequence spans 156 residues: Aspartate carbamoyltransferase regulatory chain (156 aa).

The Zn(2+) site is built by Cys107, Cys112, Cys137, and Cys140.

Belongs to the PyrI family. Contains catalytic and regulatory chains. It depends on Zn(2+) as a cofactor.

Functionally, involved in allosteric regulation of aspartate carbamoyltransferase. This is Aspartate carbamoyltransferase regulatory chain from Methanopyrus kandleri (strain AV19 / DSM 6324 / JCM 9639 / NBRC 100938).